A 386-amino-acid chain; its full sequence is S-adenosylmethionine synthase (386 aa).

Residue histidine 16 participates in ATP binding. Aspartate 18 is a Mg(2+) binding site. Glutamate 44 lines the K(+) pocket. Residues glutamate 57 and glutamine 100 each coordinate L-methionine. The interval 100–110 (QSPDINVGVDQ) is flexible loop. ATP-binding positions include 164 to 166 (DGK), 231 to 232 (RF), aspartate 240, 246 to 247 (RK), alanine 263, and lysine 267. Aspartate 240 contributes to the L-methionine binding site. Lysine 271 provides a ligand contact to L-methionine.

This sequence belongs to the AdoMet synthase family. In terms of assembly, homotetramer; dimer of dimers. Mg(2+) is required as a cofactor. Requires K(+) as cofactor.

The protein resides in the cytoplasm. It carries out the reaction L-methionine + ATP + H2O = S-adenosyl-L-methionine + phosphate + diphosphate. It functions in the pathway amino-acid biosynthesis; S-adenosyl-L-methionine biosynthesis; S-adenosyl-L-methionine from L-methionine: step 1/1. Functionally, catalyzes the formation of S-adenosylmethionine (AdoMet) from methionine and ATP. The overall synthetic reaction is composed of two sequential steps, AdoMet formation and the subsequent tripolyphosphate hydrolysis which occurs prior to release of AdoMet from the enzyme. In Sulfurovum sp. (strain NBC37-1), this protein is S-adenosylmethionine synthase.